The sequence spans 494 residues: ATP synthase subunit alpha 1 (494 aa).

This sequence belongs to the ATPase alpha/beta chains family. F-type ATPases have 2 components, CF(1) - the catalytic core - and CF(0) - the membrane proton channel. CF(1) has five subunits: alpha(3), beta(3), gamma(1), delta(1), epsilon(1). CF(0) has three main subunits: a(1), b(2) and c(9-12). The alpha and beta chains form an alternating ring which encloses part of the gamma chain. CF(1) is attached to CF(0) by a central stalk formed by the gamma and epsilon chains, while a peripheral stalk is formed by the delta and b chains.

It localises to the cell inner membrane. The enzyme catalyses ATP + H2O + 4 H(+)(in) = ADP + phosphate + 5 H(+)(out). Produces ATP from ADP in the presence of a proton gradient across the membrane. The alpha chain is a regulatory subunit. In Hahella chejuensis (strain KCTC 2396), this protein is ATP synthase subunit alpha 1.